The following is a 1523-amino-acid chain: Disco-interacting protein 2 homolog A (1523 aa).

A DMAP1-binding domain is found at 9 to 105 (EAAPLPAEVL…TSSASEDEGS (97 aa)). A disordered region spans residues 72 to 110 (KMPMPSKRRSALVHSSVETYTPPDTSSASEDEGSLRRPG). Over residues 87-99 (SVETYTPPDTSSA) the composition is skewed to polar residues. 2 positions are modified to phosphothreonine: threonine 92 and threonine 115. The interval 132–158 (QGSSTSSSASSTSSHPGGRPAAAPSAS) is disordered. The segment covering 134 to 158 (SSTSSSASSTSSHPGGRPAAAPSAS) has biased composition (low complexity). 2 short sequence motifs (PXXP motif; required for interaction with CTTN) span residues 235–238 (PKRP) and 259–262 (PNQP).

It belongs to the DIP2 family. As to quaternary structure, interacts with FSTL1; DIP2A may act as a cell surface receptor for FSTL1. Interacts (via N-terminus) with CTTN (via SH3 domain); the interaction promotes acetylation of CTTN and is required for proper synaptic transmission. Interacts with SHANK3. As to expression, detected in heart, liver, spleen, lung, kidney and brain with highest levels in brain (at protein level). In adult cortex, preferentially expressed in excitatory neurons. Broadly expressed in neuronal, reproductive and vascular tissues as well as in heart, kidney, liver and lung with expression detected in neurons, mesenchyme, endothelium, smooth muscle cells and cardiomyocytes. Expressed in ectoderm-derived tissues in the developing embryo. Expressed in the developing nervous system.

It is found in the cell membrane. Its subcellular location is the mitochondrion. The protein localises to the cell projection. It localises to the dendritic spine. It catalyses the reaction acetate + ATP + CoA = acetyl-CoA + AMP + diphosphate. Functionally, catalyzes the de novo synthesis of acetyl-CoA in vitro. Promotes acetylation of CTTN, possibly by providing the acetyl donor, ensuring correct dendritic spine morphology and synaptic transmission. Binds to follistatin-related protein FSTL1 and may act as a cell surface receptor for FSTL1, contributing to AKT activation and subsequent FSTL1-induced survival and function of endothelial cells and cardiac myocytes. This Mus musculus (Mouse) protein is Disco-interacting protein 2 homolog A (Dip2a).